The chain runs to 488 residues: Inosine-5'-monophosphate dehydrogenase (488 aa).

CBS domains lie at V95–I153 and M157–E216. Residues D250 and G300 to G302 each bind NAD(+). K(+) is bound by residues G302 and G304. S305 serves as a coordination point for IMP. C307 contacts K(+). Catalysis depends on C307, which acts as the Thioimidate intermediate. Residues D340–G342, G363–S364, and Y387–G391 contribute to the IMP site. The active-site Proton acceptor is the R403. Residue E417 participates in IMP binding. Residues G468–F488 form a disordered region. Residues E471, S472, and H473 each coordinate K(+). Positions H475–F488 are enriched in polar residues.

It belongs to the IMPDH/GMPR family. In terms of assembly, homotetramer. It depends on K(+) as a cofactor.

It carries out the reaction IMP + NAD(+) + H2O = XMP + NADH + H(+). It functions in the pathway purine metabolism; XMP biosynthesis via de novo pathway; XMP from IMP: step 1/1. Its activity is regulated as follows. Mycophenolic acid (MPA) is a non-competitive inhibitor that prevents formation of the closed enzyme conformation by binding to the same site as the amobile flap. In contrast, mizoribine monophosphate (MZP) is a competitive inhibitor that induces the closed conformation. MPA is a potent inhibitor of mammalian IMPDHs but a poor inhibitor of the bacterial enzymes. MZP is a more potent inhibitor of bacterial IMPDH. In terms of biological role, catalyzes the conversion of inosine 5'-phosphate (IMP) to xanthosine 5'-phosphate (XMP), the first committed and rate-limiting step in the de novo synthesis of guanine nucleotides, and therefore plays an important role in the regulation of cell growth. The sequence is that of Inosine-5'-monophosphate dehydrogenase from Staphylococcus aureus (strain MW2).